The sequence spans 663 residues: Nuclear receptor-binding protein homolog (663 aa).

Low complexity predominate over residues 1–14; that stretch reads MSNSQANAGSSGSA. Positions 1-112 are disordered; sequence MSNSQANAGS…SEDESEILEE (112 aa). Over residues 19–46 the composition is skewed to polar residues; the sequence is LNPSGSATLVPNLTTTNASSQATPASTI. Low complexity-rich tracts occupy residues 47-57 and 81-94; these read PQQQQPQQSQP and VVVA…NLDS. The span at 101 to 111 shows a compositional bias: acidic residues; it reads DDSEDESEILE. Residues 122-392 enclose the Protein kinase domain; it reads REEVDQRDVP…ANDLLFHPLL (271 aa). Disordered stretches follow at residues 481 to 505 and 638 to 663; these read PNFR…EPVD and YVPQ…TTSN. Residues serine 489, serine 495, and serine 498 each carry the phosphoserine modification. The residue at position 500 (threonine 500) is a Phosphothreonine. Low complexity predominate over residues 641–652; sequence QDQQQYQQQQQE.

The protein belongs to the protein kinase superfamily. Ser/Thr protein kinase family.

Its subcellular location is the cytoplasm. It localises to the cell cortex. Functionally, may play a role in subcellular trafficking between the endoplasmic reticulum and Golgi apparatus. In Drosophila pseudoobscura pseudoobscura (Fruit fly), this protein is Nuclear receptor-binding protein homolog.